The sequence spans 117 residues: Large ribosomal subunit protein bL20 (117 aa).

The protein belongs to the bacterial ribosomal protein bL20 family.

Its function is as follows. Binds directly to 23S ribosomal RNA and is necessary for the in vitro assembly process of the 50S ribosomal subunit. It is not involved in the protein synthesizing functions of that subunit. This Gloeothece citriformis (strain PCC 7424) (Cyanothece sp. (strain PCC 7424)) protein is Large ribosomal subunit protein bL20.